Reading from the N-terminus, the 304-residue chain is Capsid protein (304 aa).

2 stretches are compositionally biased toward basic and acidic residues: residues 1-24 (MGDS…REAR) and 32-54 (FEGK…EMSL). The interval 1–54 (MGDSTKKAETAKDEGTSQERREARPLPTAADFEGKDTSENTDGRAADADGEMSL) is disordered.

The protein belongs to the potexviruses coat protein family.

Its subcellular location is the virion. Its function is as follows. Required for genome encapsidation. Forms ribonucleoprotein complexes along with TGB1 helicase and viral RNA. This chain is Capsid protein, found in Potato virus M (strain Russian) (PVM).